The following is a 214-amino-acid chain: 3-isopropylmalate dehydratase small subunit (214 aa).

It belongs to the LeuD family. LeuD type 1 subfamily. Heterodimer of LeuC and LeuD.

It carries out the reaction (2R,3S)-3-isopropylmalate = (2S)-2-isopropylmalate. It functions in the pathway amino-acid biosynthesis; L-leucine biosynthesis; L-leucine from 3-methyl-2-oxobutanoate: step 2/4. In terms of biological role, catalyzes the isomerization between 2-isopropylmalate and 3-isopropylmalate, via the formation of 2-isopropylmaleate. In Nitrosococcus oceani (strain ATCC 19707 / BCRC 17464 / JCM 30415 / NCIMB 11848 / C-107), this protein is 3-isopropylmalate dehydratase small subunit.